Reading from the N-terminus, the 1432-residue chain is ABC transporter B family member 3 (1432 aa).

Disordered stretches follow at residues 1-21 and 48-149; these read MDDGNENNENAQHDEYDEEEI and ITQP…KTEE. 3 stretches are compositionally biased toward low complexity: residues 52–62, 76–106, and 118–135; these read SNNNNNSNNNN, NNNNNNNNNNNNNNNNNNNNNNNSNNSFNNN, and NTNENNNKNNNNNNNNND. Residues 117–163 adopt a coiled-coil conformation; that stretch reads ENTNENNNKNNNNNNNNNDDYNDGADERVKTEEEIKKEAENELNQSV. Positions 180–479 constitute an ABC transmembrane type-1 1 domain; sequence MFLGTIAAVI…ASPCLALFAQ (300 aa). Helical transmembrane passes span 185-205, 232-252, 303-323, 325-345, 410-430, and 457-477; these read IAAVINGAAMPTVSLVFGLVV, LLMLGGGVFVLSYLETTLWMI, KVGRFIHFFSTFVAGFVIGFT, GWQLTLVITSVSPLLAIGGFF, GLGLGFVQFVILGTYALAFWY, and FFAVIIGATSIGQASPCLALF. The ABC transporter 1 domain occupies 514–750; the sequence is IEFKDVGFHY…QGLYFDLVEK (237 aa). 549-556 provides a ligand contact to ATP; that stretch reads GDSGGGKS. A disordered region spans residues 787–819; it reads KRSLRKNESESNKKDKEDSNNKKKKKSNKKKVE. Basic and acidic residues predominate over residues 791–807; sequence RKNESESNKKDKEDSNN. The ABC transmembrane type-1 2 domain occupies 837–1157; the sequence is WCFGFLSAVG…ASSFAPDLAK (321 aa). 6 consecutive transmembrane segments (helical) span residues 838 to 858, 882 to 902, 968 to 988, 989 to 1009, 1060 to 1080, and 1134 to 1154; these read CFGFLSAVGTGAVYPGFAMVF, LMFVALAVGAGISNFFQGFLF, MVGGLVIAFYSGWQLTLVIIA, CFPLVVITSKVQMQILAGFSS, ISGFAFGFTQLILFCVYCLSF, and VFFAIVMSAIGVGQASSFAPD. The region spanning 1192-1428 is the ABC transporter 2 domain; the sequence is IEFKNLHFSY…EGPYSQLWYN (237 aa). 1227–1234 contributes to the ATP binding site; it reads GDSGGGKS.

The protein belongs to the ABC transporter superfamily. ABCB family. Multidrug resistance exporter (TC 3.A.1.201) subfamily.

It is found in the membrane. In Dictyostelium discoideum (Social amoeba), this protein is ABC transporter B family member 3 (abcB3).